The following is a 299-amino-acid chain: Hairy/enhancer-of-split related with YRPW motif protein 1 (299 aa).

The interval 1-53 (MKRAHPDYSSSDSELDETIEVEKESADENGNLSSALCSMSPTTSSQVLARKRR) is disordered. Residues 28-47 (ENGNLSSALCSMSPTTSSQV) show a composition bias toward polar residues. Positions 48 to 117 (LARKRRRGII…GGKGYFDAHA (70 aa)) are transcriptional repression and interaction with NCOR1 and SIN3A. A bHLH domain is found at 49 to 104 (ARKRRRGIIEKRRRDRINNSLSELRRLVPSAFEKQGSAKLEKAEILQMTVDHLKML). The Orange domain occupies 122–158 (YRSLGFRECLAEVARYLSIIEGLDASDPLLVRLVSHL). The tract at residues 194-234 (LLLPQNGHGNAGTAASPTEPHHQGRLASAHPEAPALRAPPS) is disordered. The short motif at 289–292 (YRPW) is the YRPW motif element.

This sequence belongs to the HEY family. In terms of assembly, may self-associate. Interacts with HES1, NCOR1 and SIN3A. Interacts with GATA4, GATA6 and HDAC1 and HEYL. Interacts with CCDC89/BOIP. As to expression, expressed in somitic mesoderm, brain, central nervous system, kidney, heart, nasal epithelium, limbs, lung, muscle, ovary and testis.

The protein localises to the nucleus. Functionally, transcriptional repressor which binds preferentially to the canonical E box sequence 5'-CACGTG-3'. Downstream effector of Notch signaling required for cardiovascular development. Specifically required for the Notch-induced endocardial epithelial to mesenchymal transition, which is itself criticial for cardiac valve and septum development. May be required in conjunction with HEY2 to specify arterial cell fate or identity. Promotes maintenance of neuronal precursor cells and glial versus neuronal fate specification. Represses transcription by the cardiac transcriptional activators GATA4 and GATA6 and by the neuronal bHLH factors ASCL1/MASH1 and NEUROD4/MATH3. The sequence is that of Hairy/enhancer-of-split related with YRPW motif protein 1 (Hey1) from Mus musculus (Mouse).